A 43-amino-acid chain; its full sequence is Protein PsbN (43 aa).

Residues 7–29 (LSIALAAVCIGVTGYSIYLSFGP) form a helical membrane-spanning segment.

It belongs to the PsbN family.

The protein resides in the cellular thylakoid membrane. May play a role in photosystem I and II biogenesis. The sequence is that of Protein PsbN from Thermosynechococcus vestitus (strain NIES-2133 / IAM M-273 / BP-1).